Here is a 576-residue protein sequence, read N- to C-terminus: Phosphoenolpyruvate-protein phosphotransferase (576 aa).

The active-site Tele-phosphohistidine intermediate is histidine 189. Residues arginine 296 and arginine 332 each contribute to the phosphoenolpyruvate site. Residues glutamate 431 and aspartate 455 each contribute to the Mg(2+) site. Residues 454 to 455 (ND) and arginine 465 each bind phosphoenolpyruvate. Catalysis depends on cysteine 502, which acts as the Proton donor.

The protein belongs to the PEP-utilizing enzyme family. In terms of assembly, homodimer. It depends on Mg(2+) as a cofactor.

The protein localises to the cytoplasm. The catalysed reaction is L-histidyl-[protein] + phosphoenolpyruvate = N(pros)-phospho-L-histidyl-[protein] + pyruvate. General (non sugar-specific) component of the phosphoenolpyruvate-dependent sugar phosphotransferase system (sugar PTS). This major carbohydrate active-transport system catalyzes the phosphorylation of incoming sugar substrates concomitantly with their translocation across the cell membrane. Enzyme I transfers the phosphoryl group from phosphoenolpyruvate (PEP) to the phosphoryl carrier protein (HPr). In Buchnera aphidicola subsp. Baizongia pistaciae (strain Bp), this protein is Phosphoenolpyruvate-protein phosphotransferase (ptsI).